Here is a 419-residue protein sequence, read N- to C-terminus: UDP-N-acetylglucosamine 1-carboxyvinyltransferase (419 aa).

Residue 22–23 (KN) coordinates phosphoenolpyruvate. Residue Arg-91 coordinates UDP-N-acetyl-alpha-D-glucosamine. The Proton donor role is filled by Cys-115. 2-(S-cysteinyl)pyruvic acid O-phosphothioketal is present on Cys-115. UDP-N-acetyl-alpha-D-glucosamine contacts are provided by residues 120–124 (RPVDL), 160–163 (KVSV), Asp-305, and Val-327.

This sequence belongs to the EPSP synthase family. MurA subfamily.

It is found in the cytoplasm. The catalysed reaction is phosphoenolpyruvate + UDP-N-acetyl-alpha-D-glucosamine = UDP-N-acetyl-3-O-(1-carboxyvinyl)-alpha-D-glucosamine + phosphate. Its pathway is cell wall biogenesis; peptidoglycan biosynthesis. In terms of biological role, cell wall formation. Adds enolpyruvyl to UDP-N-acetylglucosamine. This Salmonella schwarzengrund (strain CVM19633) protein is UDP-N-acetylglucosamine 1-carboxyvinyltransferase.